Reading from the N-terminus, the 627-residue chain is DNA mismatch repair protein MutL (627 aa).

The disordered stretch occupies residues phenylalanine 363 to tyrosine 397. Low complexity predominate over residues alanine 364 to alanine 387.

Belongs to the DNA mismatch repair MutL/HexB family.

This protein is involved in the repair of mismatches in DNA. It is required for dam-dependent methyl-directed DNA mismatch repair. May act as a 'molecular matchmaker', a protein that promotes the formation of a stable complex between two or more DNA-binding proteins in an ATP-dependent manner without itself being part of a final effector complex. This chain is DNA mismatch repair protein MutL, found in Shigella flexneri serotype 5b (strain 8401).